The chain runs to 199 residues: MKQSHFFAHLSRLKLINRWPLMRNVRTENVSEHSLQVAMVAHALAAIKNRKFGGNVNAERIALLAMYHDASEVLTGDLPTPVKYFNSQIAQEYKAIEKIAQQKLVDMVPEELQDIFAPLIDEHAYSDEEKSLVKQADALCAYLKCLEELAAGNNEFLLAKTRLEATLEARRSQEMDYFMEVFVPSFHLSLDEISQDSPL.

Substrate-binding positions include 18 to 19 (RW) and His33. The region spanning 30 to 142 (VSEHSLQVAM…VKQADALCAY (113 aa)) is the HD domain. The a divalent metal cation site is built by His33, His68, and Asp69. Residues Asp69, 77–80 (DLPT), and Asp137 contribute to the substrate site. An a divalent metal cation-binding site is contributed by Asp137.

This sequence belongs to the 5DNU family. In terms of assembly, homodimer. A divalent metal cation is required as a cofactor.

The protein localises to the cytoplasm. The catalysed reaction is a 2'-deoxyribonucleoside 5'-phosphate + H2O = a 2'-deoxyribonucleoside + phosphate. Catalyzes the strictly specific dephosphorylation of 2'-deoxyribonucleoside 5'-monophosphates. The sequence is that of 5'-deoxynucleotidase YfbR from Escherichia coli O45:K1 (strain S88 / ExPEC).